We begin with the raw amino-acid sequence, 337 residues long: Protein-methionine-sulfoxide reductase catalytic subunit MsrP (337 aa).

The tat-type signal signal peptide spans 1–50; it reads MLIKLPSASGSKESDVTPESIYLSRRTLLASSLAGLAVTALPRWASAADA. Residues asparagine 94, 97 to 98, cysteine 152, threonine 187, asparagine 237, arginine 242, and 253 to 255 each bind Mo-molybdopterin; these read YE and SVK.

It belongs to the MsrP family. As to quaternary structure, heterodimer of a catalytic subunit (MsrP) and a heme-binding subunit (MsrQ). Mo-molybdopterin is required as a cofactor. Predicted to be exported by the Tat system. The position of the signal peptide cleavage has not been experimentally proven.

The protein localises to the periplasm. The enzyme catalyses L-methionyl-[protein] + a quinone + H2O = L-methionyl-(S)-S-oxide-[protein] + a quinol. It catalyses the reaction L-methionyl-[protein] + a quinone + H2O = L-methionyl-(R)-S-oxide-[protein] + a quinol. Its function is as follows. Part of the MsrPQ system that repairs oxidized periplasmic proteins containing methionine sulfoxide residues (Met-O), using respiratory chain electrons. Thus protects these proteins from oxidative-stress damage caused by reactive species of oxygen and chlorine generated by the host defense mechanisms. MsrPQ is essential for the maintenance of envelope integrity under bleach stress, rescuing a wide series of structurally unrelated periplasmic proteins from methionine oxidation. The catalytic subunit MsrP is non-stereospecific, being able to reduce both (R-) and (S-) diastereoisomers of methionine sulfoxide. This is Protein-methionine-sulfoxide reductase catalytic subunit MsrP from Pseudomonas syringae pv. tomato (strain ATCC BAA-871 / DC3000).